A 217-amino-acid polypeptide reads, in one-letter code: tRNA (guanine-N(7)-)-methyltransferase (217 aa).

S-adenosyl-L-methionine is bound by residues Glu43, Asp68, Asn101, and Asn123. Substrate is bound at residue Lys127. The segment at 129-134 (KHNKRR) is interaction with RNA. Substrate is bound by residues Asp159 and 196 to 199 (TEYE).

Belongs to the class I-like SAM-binding methyltransferase superfamily. TrmB family.

It carries out the reaction guanosine(46) in tRNA + S-adenosyl-L-methionine = N(7)-methylguanosine(46) in tRNA + S-adenosyl-L-homocysteine. It functions in the pathway tRNA modification; N(7)-methylguanine-tRNA biosynthesis. Its function is as follows. Catalyzes the formation of N(7)-methylguanine at position 46 (m7G46) in tRNA. The protein is tRNA (guanine-N(7)-)-methyltransferase of Clostridium botulinum (strain Okra / Type B1).